The primary structure comprises 212 residues: MAERHTIADSKRAFHQAFPHVIAPLYRRIADELLVELHLLSHQATFQANSLFAVGLKTVFERFTQGYRPMEHPAALLSALCSSNGFDDEQLKQAAQHCLQDAEGHSDDAFQSWLKEQSLSDGAHYSRLMAVGLLALLEASSDESDASSLRQRAVKLSVDLGLPAERVEKDLTVFSSNSERMEQAVELMQETLAADRRKKEKRLAEAAESTAG.

The stretch at 179–201 (ERMEQAVELMQETLAADRRKKEK) forms a coiled coil.

Belongs to the THF1 family.

In terms of biological role, may be involved in photosynthetic membrane biogenesis. This is Protein Thf1 from Parasynechococcus marenigrum (strain WH8102).